Reading from the N-terminus, the 215-residue chain is Cytochrome b6 (215 aa).

The helical transmembrane segment at 32-52 (IFYCIGGIVFTSFLIQVASGF) threads the bilayer. Cys35 contributes to the heme c binding site. Heme b is bound by residues His86 and His100. 3 helical membrane passes run 90 to 110 (ASMMVLMLILHMFRVYLTGGF), 116 to 136 (LTWVTGVILAVLTVSFGVTGY), and 186 to 206 (LHTFVLPLLTAVFMLMHFLMI). Residues His187 and His202 each coordinate heme b.

This sequence belongs to the cytochrome b family. PetB subfamily. In terms of assembly, the 4 large subunits of the cytochrome b6-f complex are cytochrome b6, subunit IV (17 kDa polypeptide, PetD), cytochrome f and the Rieske protein, while the 4 small subunits are PetG, PetL, PetM and PetN. The complex functions as a dimer. Requires heme b as cofactor. The cofactor is heme c.

It is found in the plastid. The protein localises to the chloroplast thylakoid membrane. Its function is as follows. Component of the cytochrome b6-f complex, which mediates electron transfer between photosystem II (PSII) and photosystem I (PSI), cyclic electron flow around PSI, and state transitions. In Gracilaria tenuistipitata var. liui (Red alga), this protein is Cytochrome b6.